A 236-amino-acid chain; its full sequence is uncharacterized protein (236 aa).

Positions 5–73 constitute an HTH gntR-type domain; the sequence is QSTVENAKEK…DRKGWFVTQP (69 aa). Residues 33 to 52 constitute a DNA-binding region (H-T-H motif); the sequence is ERELGELLGIKRMTLRQALL.

This is an uncharacterized protein from Escherichia coli O157:H7.